The following is a 253-amino-acid chain: Phosphate import ATP-binding protein PstB 1 (253 aa).

The ABC transporter domain maps to 7 to 248 (LQIRDLSVYY…PKRKETEDYI (242 aa)). 39-46 (GPSGSGKS) contributes to the ATP binding site.

This sequence belongs to the ABC transporter superfamily. Phosphate importer (TC 3.A.1.7) family. As to quaternary structure, the complex is composed of two ATP-binding proteins (PstB), two transmembrane proteins (PstC and PstA) and a solute-binding protein (PstS).

The protein localises to the cell membrane. The enzyme catalyses phosphate(out) + ATP + H2O = ADP + 2 phosphate(in) + H(+). Part of the ABC transporter complex PstSACB involved in phosphate import. Responsible for energy coupling to the transport system. This Streptococcus pyogenes serotype M12 (strain MGAS9429) protein is Phosphate import ATP-binding protein PstB 1.